Reading from the N-terminus, the 1204-residue chain is Cingulin (1204 aa).

Positions 7-359 (MAEPRGPVDH…VMMSSGSSKA (353 aa)) are head. The tract at residues 25–48 (EPVSGAEMGTLRRGGRRPAKDARA) is disordered. Residues 48-62 (ASTYGVAVRVQGIAG) carry the ZIM motif. The segment at 54 to 67 (AVRVQGIAGQPFVV) is interaction with TJP1/ZO1. The interval 68–269 (LNSGEKGGDS…SPLSGLSRAR (202 aa)) is disordered. A phosphoserine mark is found at S95, S96, S98, S135, S137, S140, S155, and S165. Positions 126-140 (TQWNGKLLRSQSQAS) are enriched in polar residues. Polar residues predominate over residues 166-190 (PGSTIDTAPLSSVDSLINKFDSQLR). Basic and acidic residues predominate over residues 207-231 (EQRKRSKSLDSRLPRDTLEERERQS). Phosphoserine occurs at positions 214, 217, 260, 278, 340, and 353. Residues 360–1161 (VAGQGELTRK…SLEKDSWRKA (802 aa)) are a coiled coil. K581 is subject to N6-acetyllysine. A disordered region spans residues 1156–1182 (DSWRKASRSAAESTLKHEGLSSDEEFD). Residues 1162–1204 (SRSAAESTLKHEGLSSDEEFDGVYDPSSIASLLTESNLQTSSC) are tail. A phosphoserine mark is found at S1176 and S1177.

Belongs to the cingulin family. In terms of assembly, homodimer. Interacts with TJP1/ZO1 and SPEF1.

It is found in the cell junction. The protein localises to the tight junction. Its function is as follows. Probably plays a role in the formation and regulation of the tight junction (TJ) paracellular permeability barrier. In Callithrix jacchus (White-tufted-ear marmoset), this protein is Cingulin.